A 318-amino-acid chain; its full sequence is Homoserine kinase (318 aa).

97-107 (PIGSGLGSSAC) contributes to the ATP binding site.

The protein belongs to the GHMP kinase family. Homoserine kinase subfamily.

The protein localises to the cytoplasm. The catalysed reaction is L-homoserine + ATP = O-phospho-L-homoserine + ADP + H(+). Its pathway is amino-acid biosynthesis; L-threonine biosynthesis; L-threonine from L-aspartate: step 4/5. Functionally, catalyzes the ATP-dependent phosphorylation of L-homoserine to L-homoserine phosphate. In Aliivibrio fischeri (strain ATCC 700601 / ES114) (Vibrio fischeri), this protein is Homoserine kinase.